A 273-amino-acid polypeptide reads, in one-letter code: Putative pyruvate, phosphate dikinase regulatory protein (273 aa).

149 to 156 (GPSRTSKT) serves as a coordination point for ADP.

This sequence belongs to the pyruvate, phosphate/water dikinase regulatory protein family. PDRP subfamily.

It catalyses the reaction N(tele)-phospho-L-histidyl/L-threonyl-[pyruvate, phosphate dikinase] + ADP = N(tele)-phospho-L-histidyl/O-phospho-L-threonyl-[pyruvate, phosphate dikinase] + AMP + H(+). It carries out the reaction N(tele)-phospho-L-histidyl/O-phospho-L-threonyl-[pyruvate, phosphate dikinase] + phosphate + H(+) = N(tele)-phospho-L-histidyl/L-threonyl-[pyruvate, phosphate dikinase] + diphosphate. Its function is as follows. Bifunctional serine/threonine kinase and phosphorylase involved in the regulation of the pyruvate, phosphate dikinase (PPDK) by catalyzing its phosphorylation/dephosphorylation. The sequence is that of Putative pyruvate, phosphate dikinase regulatory protein from Rickettsia canadensis (strain McKiel).